The following is a 341-amino-acid chain: Methionine import ATP-binding protein MetN 1 (341 aa).

Residues 2–241 (IEFRQVSKSF…PKTTIAQNFV (240 aa)) form the ABC transporter domain. ATP is bound at residue 38–45 (GYSGAGKS).

Belongs to the ABC transporter superfamily. Methionine importer (TC 3.A.1.24) family. The complex is composed of two ATP-binding proteins (MetN), two transmembrane proteins (MetI) and a solute-binding protein (MetQ).

The protein localises to the cell membrane. It carries out the reaction L-methionine(out) + ATP + H2O = L-methionine(in) + ADP + phosphate + H(+). It catalyses the reaction D-methionine(out) + ATP + H2O = D-methionine(in) + ADP + phosphate + H(+). Its function is as follows. Part of the ABC transporter complex MetNIQ involved in methionine import. Responsible for energy coupling to the transport system. This Staphylococcus aureus (strain Mu50 / ATCC 700699) protein is Methionine import ATP-binding protein MetN 1.